A 223-amino-acid chain; its full sequence is MOB-like protein phocein (223 aa).

Residues 1–23 form a disordered region; sequence MTAATENRTVRRNGPGTKRADWN. Cys-92, Cys-97, His-169, and His-174 together coordinate Zn(2+).

This sequence belongs to the MOB1/phocein family.

It is found in the cytoplasm. Its subcellular location is the perinuclear region. The protein resides in the membrane. The protein localises to the golgi apparatus. It localises to the golgi stack membrane. Its function is as follows. May play a role in membrane trafficking, specifically in membrane budding reactions. In Caenorhabditis elegans, this protein is MOB-like protein phocein.